The following is a 775-amino-acid chain: Kojibiose phosphorylase (775 aa).

Tryptophan 361–aspartate 362 provides a ligand contact to substrate. Residue glutamate 501 is the Proton donor of the active site. Position 614–615 (lysine 614–glutamine 615) interacts with substrate.

Belongs to the glycosyl hydrolase 65 family. Homohexamer.

It catalyses the reaction kojibiose + phosphate = beta-D-glucose 1-phosphate + D-glucose. Its activity is regulated as follows. Inhibited by Hg(2+) and Pb(2+). In terms of biological role, catalyzes the reversible phosphorolysis of kojibiose into beta-D-glucose 1-phosphate (Glc1P) and D-glucose. Can act with alpha-1,2-oligoglucans, such as selaginose, but more slowly. Inactive when disaccharides with linkages other than alpha-1,2 linkages, such as sophorose, trehalose, neotrehalose, nigerose, laminaribiose, maltose, cellobiose, isomaltose, gentiobiose, sucrose and lactose, are used as substrates. In contrast, shows broad specificity for the reverse reaction. Various monosaccharides and disaccharides having a glucosyl residue at the non-reducing end are effective acceptors. This Thermoanaerobacter brockii (Thermoanaerobium brockii) protein is Kojibiose phosphorylase.